The sequence spans 316 residues: UPF0761 membrane protein PM1616 (316 aa).

The next 6 helical transmembrane spans lie at 36–56, 92–112, 128–148, 172–192, 204–224, and 236–256; these read MLAL…FPVF, QMSA…INSI, LVFS…LIGA, ILSF…YTVV, IGAL…LWYV, and AMAT…VILI.

This sequence belongs to the UPF0761 family.

It localises to the cell inner membrane. This Pasteurella multocida (strain Pm70) protein is UPF0761 membrane protein PM1616.